The chain runs to 351 residues: Methylthioribose-1-phosphate isomerase (351 aa).

Aspartate 244 serves as the catalytic Proton donor.

This sequence belongs to the eIF-2B alpha/beta/delta subunits family. MtnA subfamily.

It localises to the cytoplasm. It is found in the nucleus. The catalysed reaction is 5-(methylsulfanyl)-alpha-D-ribose 1-phosphate = 5-(methylsulfanyl)-D-ribulose 1-phosphate. It participates in amino-acid biosynthesis; L-methionine biosynthesis via salvage pathway; L-methionine from S-methyl-5-thio-alpha-D-ribose 1-phosphate: step 1/6. Catalyzes the interconversion of methylthioribose-1-phosphate (MTR-1-P) into methylthioribulose-1-phosphate (MTRu-1-P). The chain is Methylthioribose-1-phosphate isomerase from Anopheles gambiae (African malaria mosquito).